The following is a 465-amino-acid chain: A-type ATP synthase subunit B (465 aa).

Belongs to the ATPase alpha/beta chains family. As to quaternary structure, has multiple subunits with at least A(3), B(3), C, D, E, F, H, I and proteolipid K(x).

Its subcellular location is the cell membrane. In terms of biological role, component of the A-type ATP synthase that produces ATP from ADP in the presence of a proton gradient across the membrane. The B chain is a regulatory subunit. This Thermococcus kodakarensis (strain ATCC BAA-918 / JCM 12380 / KOD1) (Pyrococcus kodakaraensis (strain KOD1)) protein is A-type ATP synthase subunit B.